We begin with the raw amino-acid sequence, 302 residues long: 4-hydroxy-tetrahydrodipicolinate synthase (302 aa).

Residue T56 participates in pyruvate binding. The active-site Proton donor/acceptor is Y145. K173 acts as the Schiff-base intermediate with substrate in catalysis. V215 serves as a coordination point for pyruvate.

Belongs to the DapA family. In terms of assembly, homotetramer; dimer of dimers.

Its subcellular location is the cytoplasm. It carries out the reaction L-aspartate 4-semialdehyde + pyruvate = (2S,4S)-4-hydroxy-2,3,4,5-tetrahydrodipicolinate + H2O + H(+). It participates in amino-acid biosynthesis; L-lysine biosynthesis via DAP pathway; (S)-tetrahydrodipicolinate from L-aspartate: step 3/4. Its function is as follows. Catalyzes the condensation of (S)-aspartate-beta-semialdehyde [(S)-ASA] and pyruvate to 4-hydroxy-tetrahydrodipicolinate (HTPA). The protein is 4-hydroxy-tetrahydrodipicolinate synthase of Prochlorococcus marinus subsp. pastoris (strain CCMP1986 / NIES-2087 / MED4).